The following is a 317-amino-acid chain: MRRASRDYTKYLRGSEEMGGGPGAPHEGPLHAPPPPAPHQPPAASRSMFVALLGLGLGQVVCSVALFFYFRAQMDPNRISEDGTHCIYRILRLHENADFQDTTLESQDTKLIPDSCRRIKQAFQGAVQKELQHIVGSQHIRAEKAMVDGSWLDLAKRSKLEAQPFAHLTINATDIPSGSHKVSLSSWYHDRGWAKISNMTFSNGKLIVNQDGFYYLYANICFRHHETSGDLATEYLQLMVYVTKTSIKIPSSHTLMKGGSTKYWSGNSEFHFYSINVGGFFKLRSGEEISIEVSNPSLLDPDQDATYFGAFKVRDID.

Over residues Met1–Glu16 the composition is skewed to basic and acidic residues. The disordered stretch occupies residues Met1–Ala43. The Cytoplasmic segment spans residues Met1–Ser47. Positions His31 to Pro41 are enriched in pro residues. Residues Met48 to Phe68 form a helical; Signal-anchor for type II membrane protein membrane-spanning segment. Over Tyr69–Asp317 the chain is Extracellular. The 150-residue stretch at Pro164–Val313 folds into the THD domain. 2 N-linked (GlcNAc...) asparagine glycosylation sites follow: Asn171 and Asn198.

The protein belongs to the tumor necrosis factor family. As to quaternary structure, homotrimer. Interacts with TNFRSF11B. Interacts with TNFRSF11A. Interacts with FBN1 (via N-terminal domain) in a Ca(+2)-dependent manner. Interacts with TNFAIP6 (via both Link and CUB domains). Post-translationally, the soluble form of isoform 1 derives from the membrane form by proteolytic processing. The cleavage may be catalyzed by ADAM17. Highest in the peripheral lymph nodes, weak in spleen, peripheral blood Leukocytes, bone marrow, heart, placenta, skeletal muscle, stomach and thyroid.

It localises to the cell membrane. The protein localises to the cytoplasm. The protein resides in the secreted. Cytokine that binds to TNFRSF11B/OPG and to TNFRSF11A/RANK. Osteoclast differentiation and activation factor. Augments the ability of dendritic cells to stimulate naive T-cell proliferation. May be an important regulator of interactions between T-cells and dendritic cells and may play a role in the regulation of the T-cell-dependent immune response. May also play an important role in enhanced bone-resorption in humoral hypercalcemia of malignancy. Induces osteoclastogenesis by activating multiple signaling pathways in osteoclast precursor cells, chief among which is induction of long lasting oscillations in the intracellular concentration of Ca (2+) resulting in the activation of NFATC1, which translocates to the nucleus and induces osteoclast-specific gene transcription to allow differentiation of osteoclasts. During osteoclast differentiation, in a TMEM64 and ATP2A2-dependent manner induces activation of CREB1 and mitochondrial ROS generation necessary for proper osteoclast generation. The polypeptide is Tumor necrosis factor ligand superfamily member 11 (TNFSF11) (Homo sapiens (Human)).